Here is a 303-residue protein sequence, read N- to C-terminus: N-acetyl-D-glucosamine kinase (303 aa).

ATP is bound by residues 4–11 (GFDIGGTK) and 133–140 (GVGGGLIF). Zn(2+) is bound by residues H157, C177, C179, and C184.

Belongs to the ROK (NagC/XylR) family. NagK subfamily.

The catalysed reaction is N-acetyl-D-glucosamine + ATP = N-acetyl-D-glucosamine 6-phosphate + ADP + H(+). The protein operates within cell wall biogenesis; peptidoglycan recycling. Catalyzes the phosphorylation of N-acetyl-D-glucosamine (GlcNAc) derived from cell-wall degradation, yielding GlcNAc-6-P. In Escherichia coli O139:H28 (strain E24377A / ETEC), this protein is N-acetyl-D-glucosamine kinase.